The primary structure comprises 326 residues: GTP 3',8-cyclase (326 aa).

The Radical SAM core domain maps to 6-220 (SFGRRINYLR…DRISASYELE (215 aa)). Arg15 serves as a coordination point for GTP. [4Fe-4S] cluster-binding residues include Cys22 and Cys26. Residue Tyr28 coordinates S-adenosyl-L-methionine. Cys29 is a [4Fe-4S] cluster binding site. Residue Arg65 participates in GTP binding. Residue Gly69 coordinates S-adenosyl-L-methionine. Residue Thr96 coordinates GTP. An S-adenosyl-L-methionine-binding site is contributed by Ser120. Lys157 contributes to the GTP binding site. S-adenosyl-L-methionine is bound at residue Met191. Residues Cys254 and Cys257 each coordinate [4Fe-4S] cluster. 259–261 (RVR) is a GTP binding site. Residue Cys271 participates in [4Fe-4S] cluster binding.

It belongs to the radical SAM superfamily. MoaA family. Monomer and homodimer. [4Fe-4S] cluster serves as cofactor.

It catalyses the reaction GTP + AH2 + S-adenosyl-L-methionine = (8S)-3',8-cyclo-7,8-dihydroguanosine 5'-triphosphate + 5'-deoxyadenosine + L-methionine + A + H(+). It functions in the pathway cofactor biosynthesis; molybdopterin biosynthesis. In terms of biological role, catalyzes the cyclization of GTP to (8S)-3',8-cyclo-7,8-dihydroguanosine 5'-triphosphate. The polypeptide is GTP 3',8-cyclase (Geobacter sulfurreducens (strain ATCC 51573 / DSM 12127 / PCA)).